Consider the following 539-residue polypeptide: Monocarboxylate transporter 8 (539 aa).

The interval 1–92 is disordered; it reads MALQSQASEE…VETRGTARGF (92 aa). At Ala2 the chain carries N-acetylalanine. At 2-96 the chain is on the cytoplasmic side; sequence ALQSQASEEA…GTARGFQPPE (95 aa). The segment covering 31–41 has biased composition (acidic residues); the sequence is PESEPEPEPEP. Residues 42–64 are compositionally biased toward pro residues; that stretch reads EPVPVPPPEPQPEPQPLPDPAPL. A helical transmembrane segment spans residues 97 to 117; sequence GGFGWVVVFAATWCNGSIFGI. Residues 118-143 lie on the Extracellular side of the membrane; the sequence is HNSVGILYSMLLEEEKEKNRQVEFQA. Residues 144–164 traverse the membrane as a helical segment; the sequence is AWVGALAMGMIFFCSPIVSIF. Residues 165-171 are Cytoplasmic-facing; that stretch reads TDRLGCR. A helical membrane pass occupies residues 172–192; it reads ITATAGAAVAFIGLHTSSFTS. Topologically, residues 193 to 200 are extracellular; sequence SLSLRYFT. A helical membrane pass occupies residues 201 to 221; that stretch reads YGILFGCGCSFAFQPSLVILG. The Cytoplasmic portion of the chain corresponds to 222–229; it reads HYFQRRLG. A helical membrane pass occupies residues 230-250; sequence LANGVVSAGSSIFSMSFPFLI. The Extracellular segment spans residues 251–258; that stretch reads RMLGDKIK. Residues 259-279 traverse the membrane as a helical segment; that stretch reads LAQTFQVLSTFMFVLMLLSLT. The Cytoplasmic portion of the chain corresponds to 280-322; it reads YRPLLPSSQDTPSKRGVRTLHQRFLAQLRKYFNMRVFRQRTYR. A helical transmembrane segment spans residues 323–343; it reads IWAFGIAAAALGYFVPYVHLM. Residues 344 to 356 lie on the Extracellular side of the membrane; it reads KYVEEEFSEIKET. A helical membrane pass occupies residues 357-377; that stretch reads WVLLVCIGATSGLGRLVSGHI. Over 378-386 the chain is Cytoplasmic; it reads SDSIPGLKK. A helical membrane pass occupies residues 387–407; it reads IYLQVLSFLLLGLMSMMIPLC. Residues 408–409 are Extracellular-facing; sequence RD. The helical transmembrane segment at 410–430 threads the bilayer; sequence FGGLIVVCLFLGLCDGFFITI. Residues 431-447 lie on the Cytoplasmic side of the membrane; that stretch reads MAPIAFELVGPMQASQA. Residues 448–468 traverse the membrane as a helical segment; it reads IGYLLGMMALPMIAGPPIAGL. At 469 to 477 the chain is on the extracellular side; sequence LRNCFGDYH. A helical membrane pass occupies residues 478-498; that stretch reads VAFYFAGVPPIIGAVILFFVP. Over 499 to 539 the chain is Cytoplasmic; that stretch reads LMHQRMFKKEQRDSSKDKMLAPDPDPNGELLPGSPNPEEPI. Residues 508-518 show a composition bias toward basic and acidic residues; it reads EQRDSSKDKML. Positions 508 to 539 are disordered; that stretch reads EQRDSSKDKMLAPDPDPNGELLPGSPNPEEPI.

It belongs to the major facilitator superfamily. Monocarboxylate porter (TC 2.A.1.13) family. In terms of assembly, monomer. Homodimer. Homooligomer. As to expression, highly expressed in liver and heart. In adult brain tissue expression is largely confined to endothelial cells of the blood-brain barrier (at protein level).

Its subcellular location is the cell membrane. The protein resides in the apical cell membrane. It catalyses the reaction 3,3',5-triiodo-L-thyronine(out) = 3,3',5-triiodo-L-thyronine(in). The catalysed reaction is L-thyroxine(out) = L-thyroxine(in). The enzyme catalyses 3,3',5'-triiodo-L-thyronine(out) = 3,3',5'-triiodo-L-thyronine(in). It carries out the reaction 3,3'-diiodo-L-thyronine(out) = 3,3'-diiodo-L-thyronine(in). Its function is as follows. Specific thyroid hormone transmembrane transporter, that mediates both uptake and efflux of thyroid hormones across the cell membrane independently of pH or a Na(+) gradient. Major substrates are the iodothyronines T3 and T4 and to a lesser extent rT3 and 3,3-diiodothyronine (3,3'-T2). Acts as an important mediator of thyroid hormone transport, especially T3, through the blood-brain barrier. This is Monocarboxylate transporter 8 (SLC16A2) from Homo sapiens (Human).